Here is a 150-residue protein sequence, read N- to C-terminus: Large ribosomal subunit protein bL9 (150 aa).

The protein belongs to the bacterial ribosomal protein bL9 family.

Its function is as follows. Binds to the 23S rRNA. This Pectobacterium carotovorum subsp. carotovorum (strain PC1) protein is Large ribosomal subunit protein bL9.